A 371-amino-acid chain; its full sequence is MRKTLFSGVALAAVIAFGGSAWADVLVGIGIPVTGPNAVYGAQIQKGAEAAIKEVNDAGGINGEKIAITIGDDVSDPKQGISVANKFAADGVKFVIGHFNSGVTIPASQVYAENGILEISPGATNPQYTEQGLWNTFRTCGRDDQQGTVAGQYIFDHFKDAKIAVIHDKTPYGQGLADETKKKLNELGTKETLYEGVNVGEKDFSALIAKLKQAGVNVVYWGGMHPEAGLLIRQMADQGLKAQFISGDGIVSNELASIAGDAVAGVMNTFGPDPRDDKANAELIKAFRDKGFEPEAYTLYSYAAVQSLAQAAKAAGSNDPQEVAKAMKEKGPFKTVLGDLSYDEKGDPKLPGYVMYKWEKGADGKYNYIQQ.

Positions 1-23 (MRKTLFSGVALAAVIAFGGSAWA) are cleaved as a signal peptide.

Belongs to the leucine-binding protein family.

Its function is as follows. Component of an amino-acid transport system. The protein is Leu/Ile/Val-binding protein homolog 1 of Brucella abortus (strain 2308).